We begin with the raw amino-acid sequence, 758 residues long: Vitamin K-dependent gamma-carboxylase (758 aa).

The interval 1-21 is disordered; it reads MAVSARSARTSPGSDKVQKDK. A2 carries the post-translational modification N-acetylalanine. Residues 2 to 60 are Cytoplasmic-facing; sequence AVSARSARTSPGSDKVQKDKAELISGPRQDSLMGKLLGFEWTDLSSWRRLVTLLNRPTD. A helical membrane pass occupies residues 61 to 81; it reads PASLAVFRFLFGFLMVLDIPQ. At 82-113 the chain is on the lumenal side; the sequence is ERGLSSLDRKYLDGLDVCRFPLLDALRPLPLD. C99 and C450 are oxidised to a cystine. Residues 114-134 traverse the membrane as a helical segment; that stretch reads WMYLVYTIMFLGALGMMLGLC. Residues 135–136 lie on the Cytoplasmic side of the membrane; the sequence is YR. The chain crosses the membrane as a helical span at residues 137-157; sequence ISCVLFLLPYWYVFLLDKTSW. The Lumenal segment spans residues 158–292; it reads NNHSYLYGLL…VSYFHCMNSQ (135 aa). Residues 293–313 traverse the membrane as a helical segment; it reads LFSIGMFSYVMLASSPLFCSP. Residues 314–361 lie on the Cytoplasmic side of the membrane; it reads EWPRKLVSYCPQRLQELLPLKAAPQPSVSCVYKRSRGKSGQKPGLRHQ. A helical transmembrane segment spans residues 362–382; the sequence is LGAAFTLLYLLEQLFLPYSHF. Residues 383-758 are Lumenal-facing; it reads LTQGYNNWTN…SNPDPVHSEF (376 aa). The disordered stretch occupies residues 732 to 758; sequence GELSPSNMDSSHSNPPESNPDPVHSEF. Residues 735–747 show a composition bias toward polar residues; that stretch reads SPSNMDSSHSNPP.

It belongs to the vitamin K-dependent gamma-carboxylase family. Monomer. May interact with CALU.

Its subcellular location is the endoplasmic reticulum membrane. It carries out the reaction 4-carboxy-L-glutamyl-[protein] + 2,3-epoxyphylloquinone + H2O + H(+) = phylloquinol + L-glutamyl-[protein] + CO2 + O2. Functionally, mediates the vitamin K-dependent carboxylation of glutamate residues to calcium-binding gamma-carboxyglutamate (Gla) residues with the concomitant conversion of the reduced hydroquinone form of vitamin K to vitamin K epoxide. Catalyzes gamma-carboxylation of various proteins, such as blood coagulation factors (F2, F7, F9 and F10), osteocalcin (BGLAP) or matrix Gla protein (MGP). This Pongo abelii (Sumatran orangutan) protein is Vitamin K-dependent gamma-carboxylase (GGCX).